We begin with the raw amino-acid sequence, 378 residues long: Alginate lyase (378 aa).

The signal sequence occupies residues 1-28; that stretch reads MQTPKLIRPTLLSMAILSSMAWATGASA. Substrate contacts are provided by residues 67-68, 140-141, and Y258; these read SK and HT.

It belongs to the polysaccharide lyase 5 family.

The protein resides in the periplasm. It carries out the reaction Eliminative cleavage of alginate to give oligosaccharides with 4-deoxy-alpha-L-erythro-hex-4-enuronosyl groups at their non-reducing ends and beta-D-mannuronate at their reducing end.. The monovalent cation sodium enhances activity but is not absolutely required. Its function is as follows. Catalyzes the depolymerization of alginate by cleaving the beta-1,4 glycosidic bond between two adjacent sugar residues via a beta-elimination mechanism. Degrades deacetylated polymannuronate (polyM) alginate from P.aeruginosa more efficiently than non-deacetylated polyM and alginate from M.pyrifera. AlgL from P.syringae also degrades its own alginate, which may indicate a role in cleaving preformed alginate and/or in determining the length of the alginate polymer. May serve to degrade mislocalized alginate that is trapped in the periplasmic space. The polypeptide is Alginate lyase (Pseudomonas syringae pv. syringae).